The chain runs to 100 residues: Class II hydrophobin CU (100 aa).

An N-terminal signal peptide occupies residues 1–25; the sequence is MQFSIATIALFLSSAMAAPYSGNSN. Cystine bridges form between cysteine 32/cysteine 82, cysteine 42/cysteine 72, cysteine 43/cysteine 55, and cysteine 83/cysteine 94.

The protein belongs to the cerato-ulmin hydrophobin family. Homotetramer. Further self-assembles to form highly ordered films at water-air interfaces through intermolecular interactions.

Its subcellular location is the secreted. It is found in the cell wall. Its function is as follows. Aerial growth, conidiation, and dispersal of filamentous fungi in the environment rely upon a capability of their secreting small amphipathic proteins called hydrophobins (HPBs) with low sequence identity. Class I can self-assemble into an outermost layer of rodlet bundles on aerial cell surfaces, conferring cellular hydrophobicity that supports fungal growth, development and dispersal; whereas Class II form highly ordered films at water-air interfaces through intermolecular interactions but contribute nothing to the rodlet structure. CU is a class II hydrophobin that is implicated in the pathogenicity of this fungus on elm trees. Required for hydrophobicity and adherence of the cells and acts as a parasitic fitness factor by protecting infectious propagules from desiccation. Reduces the interfacial tension of both oil-water and air-water interfaces. The chain is Class II hydrophobin CU from Ophiostoma ulmi (Dutch elm disease fungus).